The chain runs to 690 residues: Protein AC23 (690 aa).

An N-terminal signal peptide occupies residues 1–37 (MLACKFSQYQAFIMDGVKLLGTCALIILLSTTSTVVG).

Its subcellular location is the virion. Functionally, pathogenicity factor that accelerates mortality in the host insect. This chain is Protein AC23, found in Autographa californica nuclear polyhedrosis virus (AcMNPV).